Consider the following 561-residue polypeptide: Dihydroxy-acid dehydratase (561 aa).

Residue Cys-50 coordinates [2Fe-2S] cluster. Asp-82 contributes to the Mg(2+) binding site. [2Fe-2S] cluster is bound at residue Cys-123. Residues Asp-124 and Lys-125 each contribute to the Mg(2+) site. Residue Lys-125 is modified to N6-carboxylysine. [2Fe-2S] cluster is bound at residue Cys-195. Glu-447 contributes to the Mg(2+) binding site. Ser-473 (proton acceptor) is an active-site residue.

It belongs to the IlvD/Edd family. As to quaternary structure, homodimer. Requires [2Fe-2S] cluster as cofactor. It depends on Mg(2+) as a cofactor.

The enzyme catalyses (2R)-2,3-dihydroxy-3-methylbutanoate = 3-methyl-2-oxobutanoate + H2O. It carries out the reaction (2R,3R)-2,3-dihydroxy-3-methylpentanoate = (S)-3-methyl-2-oxopentanoate + H2O. It participates in amino-acid biosynthesis; L-isoleucine biosynthesis; L-isoleucine from 2-oxobutanoate: step 3/4. It functions in the pathway amino-acid biosynthesis; L-valine biosynthesis; L-valine from pyruvate: step 3/4. Its function is as follows. Functions in the biosynthesis of branched-chain amino acids. Catalyzes the dehydration of (2R,3R)-2,3-dihydroxy-3-methylpentanoate (2,3-dihydroxy-3-methylvalerate) into 2-oxo-3-methylpentanoate (2-oxo-3-methylvalerate) and of (2R)-2,3-dihydroxy-3-methylbutanoate (2,3-dihydroxyisovalerate) into 2-oxo-3-methylbutanoate (2-oxoisovalerate), the penultimate precursor to L-isoleucine and L-valine, respectively. The sequence is that of Dihydroxy-acid dehydratase from Rippkaea orientalis (strain PCC 8801 / RF-1) (Cyanothece sp. (strain PCC 8801)).